A 559-amino-acid polypeptide reads, in one-letter code: Thermosome subunit alpha (559 aa).

The span at 535–547 (SEKKGGEGSKEES) shows a compositional bias: basic and acidic residues. Residues 535 to 559 (SEKKGGEGSKEESGGEGGSTPSLGD) are disordered.

This sequence belongs to the TCP-1 chaperonin family. In terms of assembly, forms a Heterooligomeric complex of two stacked eight-membered rings.

In terms of biological role, molecular chaperone; binds unfolded polypeptides in vitro, and has a weak ATPase activity. The polypeptide is Thermosome subunit alpha (thsA) (Saccharolobus solfataricus (strain ATCC 35092 / DSM 1617 / JCM 11322 / P2) (Sulfolobus solfataricus)).